Consider the following 355-residue polypeptide: Peptide chain release factor 1 (355 aa).

An N5-methylglutamine modification is found at Gln-233.

It belongs to the prokaryotic/mitochondrial release factor family. In terms of processing, methylated by PrmC. Methylation increases the termination efficiency of RF1.

Its subcellular location is the cytoplasm. Peptide chain release factor 1 directs the termination of translation in response to the peptide chain termination codons UAG and UAA. This chain is Peptide chain release factor 1, found in Clostridium tetani (strain Massachusetts / E88).